We begin with the raw amino-acid sequence, 270 residues long: MSKIAKTAIISPKAEIGKGVEIGEFCVIGDHIKLNDGVKLHNNVTLQGHTFIGKNTEIFPFAALGTQPQDLKYKGEYSELIIGEDNLIREFCMINPGTEGGIKKTIIGDKNLLMAYVHVAHDCVIGSHCIFANGVTLAGHIEIGDYVNIGGLTAIHQFVRIAKGCMIAGKSALGKDVPPYCTVEGNRAFIRGLNRHRMRQLLESKDIDFIHVLYKRLFRPVPSLRESAKLELEEHPNNPFVKEICSFILESSRGVAYKSSEYSNEEKQEE.

Belongs to the transferase hexapeptide repeat family. LpxA subfamily. In terms of assembly, homotrimer.

It localises to the cytoplasm. The enzyme catalyses a (3R)-hydroxyacyl-[ACP] + UDP-N-acetyl-alpha-D-glucosamine = a UDP-3-O-[(3R)-3-hydroxyacyl]-N-acetyl-alpha-D-glucosamine + holo-[ACP]. It participates in glycolipid biosynthesis; lipid IV(A) biosynthesis; lipid IV(A) from (3R)-3-hydroxytetradecanoyl-[acyl-carrier-protein] and UDP-N-acetyl-alpha-D-glucosamine: step 1/6. Functionally, involved in the biosynthesis of lipid A, a phosphorylated glycolipid that anchors the lipopolysaccharide to the outer membrane of the cell. The sequence is that of Acyl-[acyl-carrier-protein]--UDP-N-acetylglucosamine O-acyltransferase from Helicobacter pylori (strain Shi470).